Reading from the N-terminus, the 102-residue chain is NADH-quinone oxidoreductase subunit K (102 aa).

The next 3 membrane-spanning stretches (helical) occupy residues 6–26, 30–50, and 63–83; these read LIAMMILAAGLFAIGLFGVLA, IMFQLVALEVALSGPALGFVA, and MFILVLTLAAAEVAVGLALFL.

This sequence belongs to the complex I subunit 4L family. NDH-1 is composed of 14 different subunits. Subunits NuoA, H, J, K, L, M, N constitute the membrane sector of the complex.

The protein resides in the cell inner membrane. It carries out the reaction a quinone + NADH + 5 H(+)(in) = a quinol + NAD(+) + 4 H(+)(out). Its function is as follows. NDH-1 shuttles electrons from NADH, via FMN and iron-sulfur (Fe-S) centers, to quinones in the respiratory chain. The immediate electron acceptor for the enzyme in this species is believed to be ubiquinone. Couples the redox reaction to proton translocation (for every two electrons transferred, four hydrogen ions are translocated across the cytoplasmic membrane), and thus conserves the redox energy in a proton gradient. The sequence is that of NADH-quinone oxidoreductase subunit K from Rhodopseudomonas palustris (strain BisB5).